The sequence spans 196 residues: Protein hunchback (196 aa).

Disordered regions lie at residues 16–56 (SHHH…SHTN), 63–82 (LKQQQQQQQQHQHQQQQQPM), and 156–196 (LTPP…KYMA). Residues 17-29 (HHHHHHHAHHSHH) show a composition bias toward basic residues. Composition is skewed to low complexity over residues 33-43 (SNSNASNSPHQ) and 65-80 (QQQQQQQQHQHQQQQQ). Positions 177 to 196 (EPEKEHDLMSNSSEDMKYMA) are enriched in basic and acidic residues.

It belongs to the hunchback C2H2-type zinc-finger protein family.

The protein localises to the nucleus. Functionally, gap class segmentation protein that controls development of head structures. This chain is Protein hunchback (hb), found in Drosophila adunca (Fruit fly).